The primary structure comprises 465 residues: Kynureninase (465 aa).

Pyridoxal 5'-phosphate contacts are provided by residues Leu116, Thr117, Phe144–Asp147, Asp231, His234, and Tyr256. An N6-(pyridoxal phosphate)lysine modification is found at Lys257. The pyridoxal 5'-phosphate site is built by Trp291 and Asn319.

It belongs to the kynureninase family. Homodimer. Pyridoxal 5'-phosphate is required as a cofactor.

It is found in the cytoplasm. The catalysed reaction is L-kynurenine + H2O = anthranilate + L-alanine + H(+). It catalyses the reaction 3-hydroxy-L-kynurenine + H2O = 3-hydroxyanthranilate + L-alanine + H(+). It functions in the pathway amino-acid degradation; L-kynurenine degradation; L-alanine and anthranilate from L-kynurenine: step 1/1. Its pathway is cofactor biosynthesis; NAD(+) biosynthesis; quinolinate from L-kynurenine: step 2/3. In terms of biological role, catalyzes the cleavage of L-kynurenine (L-Kyn) and L-3-hydroxykynurenine (L-3OHKyn) into anthranilic acid (AA) and 3-hydroxyanthranilic acid (3-OHAA), respectively. The polypeptide is Kynureninase (Scheffersomyces stipitis (strain ATCC 58785 / CBS 6054 / NBRC 10063 / NRRL Y-11545) (Yeast)).